The following is a 416-amino-acid chain: Calreticulin (416 aa).

A glycan (N-linked (GlcNAc...) asparagine) is linked at N54. C108 and C140 are oxidised to a cystine. Y112, K114, Y131, and D138 together coordinate an alpha-D-glucoside. 7 consecutive repeat copies span residues 194–205, 213–224, 230–241, 248–259, 263–273, 277–287, and 291–301. Positions 194 to 259 are 4 X approximate repeats; it reads KQSGSVYTDW…EAKKPEDWDD (66 aa). Residues 209–281 are disordered; sequence KQIKDPEAKK…NPDYKGEWKP (73 aa). The span at 210 to 255 shows a compositional bias: basic and acidic residues; the sequence is QIKDPEAKKPEDWEDKEYIPDPEDKKPEGYDDIPKEITDPEAKKPE. Positions 263 to 301 are 3 X approximate repeats; that stretch reads GEWTAPTIPNPDYKGEWKPKKIKNPNFKGKWKAPMIDNP. E321 serves as a coordination point for an alpha-D-glucoside. Residues 349–378 are compositionally biased toward basic and acidic residues; that stretch reads ETWGKNKDAEKAAFDEAEKKKEEEEAKDDP. Residues 349–416 are disordered; it reads ETWGKNKDAE…EDDEDVHDEL (68 aa). A compositionally biased stretch (acidic residues) spans 379-416; the sequence is TESDDEKPDEEGESDGEGDDESKDIDNEEDDEDVHDEL. The short motif at 413 to 416 is the Prevents secretion from ER element; that stretch reads HDEL.

It belongs to the calreticulin family.

It localises to the endoplasmic reticulum lumen. Its function is as follows. Molecular calcium-binding chaperone promoting folding, oligomeric assembly and quality control in the ER via the calreticulin/calnexin cycle. This lectin may interact transiently with almost all of the monoglucosylated glycoproteins that are synthesized in the ER. The sequence is that of Calreticulin from Berberis stolonifera (Barberry).